The following is a 445-amino-acid chain: Protein trichome berefringence-like 7 (445 aa).

A helical; Signal-anchor for type II membrane protein transmembrane segment spans residues 69–89 (IIAGTIVSFLVIIAGGYLYVV). A GDS motif motif is present at residues 188 to 190 (GDS). A DCXHWCLPGXXDXWN motif motif is present at residues 418-432 (DCSHWCLPGVPDIWN).

This sequence belongs to the PC-esterase family. TBL subfamily.

It localises to the membrane. Functionally, may act as a bridging protein that binds pectin and other cell wall polysaccharides. Probably involved in maintaining esterification of pectins. May be involved in the specific O-acetylation of cell wall polymers. The protein is Protein trichome berefringence-like 7 (TBL7) of Arabidopsis thaliana (Mouse-ear cress).